The sequence spans 272 residues: Putative phosphoenolpyruvate synthase regulatory protein (272 aa).

152–159 provides a ligand contact to ADP; that stretch reads GVSRSGKT.

It belongs to the pyruvate, phosphate/water dikinase regulatory protein family. PSRP subfamily.

The catalysed reaction is [pyruvate, water dikinase] + ADP = [pyruvate, water dikinase]-phosphate + AMP + H(+). It carries out the reaction [pyruvate, water dikinase]-phosphate + phosphate + H(+) = [pyruvate, water dikinase] + diphosphate. In terms of biological role, bifunctional serine/threonine kinase and phosphorylase involved in the regulation of the phosphoenolpyruvate synthase (PEPS) by catalyzing its phosphorylation/dephosphorylation. The sequence is that of Putative phosphoenolpyruvate synthase regulatory protein from Methylibium petroleiphilum (strain ATCC BAA-1232 / LMG 22953 / PM1).